Here is a 597-residue protein sequence, read N- to C-terminus: Peptidyl-prolyl cis-trans isomerase-like 2 (597 aa).

A U-box domain is found at 41 to 114; sequence KKLPFNFCAA…TTDSDENKGD (74 aa). In terms of domain architecture, PPIase cyclophilin-type spans 328-483; that stretch reads NKGYVRMETN…NKIVIKDMII (156 aa). The segment covering 495–519 has biased composition (basic and acidic residues); that stretch reads KKQKEGEEERKREVARQGGTEDDRT. Disordered regions lie at residues 495–521 and 560–597; these read KKQK…RTTW and ATTT…FDGW.

The protein belongs to the cyclophilin-type PPIase family. PPIL2 subfamily.

The protein localises to the nucleus. The enzyme catalyses [protein]-peptidylproline (omega=180) = [protein]-peptidylproline (omega=0). It catalyses the reaction S-ubiquitinyl-[E2 ubiquitin-conjugating enzyme]-L-cysteine + [acceptor protein]-L-lysine = [E2 ubiquitin-conjugating enzyme]-L-cysteine + N(6)-ubiquitinyl-[acceptor protein]-L-lysine.. It functions in the pathway protein modification; protein ubiquitination. Functionally, may catalyze the cis-trans isomerization of proline imidic peptide bonds in oligopeptides thereby assisting the folding of proteins. May also function as a chaperone, playing a role in intracellular transport of proteins. May also have a protein ubiquitin ligase activity acting as an E3 ubiquitin protein ligase or as a ubiquitin-ubiquitin ligase promoting elongation of ubiquitin chains on proteins. This chain is Peptidyl-prolyl cis-trans isomerase-like 2 (ppi-2), found in Neurospora crassa (strain ATCC 24698 / 74-OR23-1A / CBS 708.71 / DSM 1257 / FGSC 987).